A 203-amino-acid polypeptide reads, in one-letter code: Transcriptional regulator GfcR (203 aa).

It belongs to the purine/pyrimidine phosphoribosyltransferase family. GfcR subfamily.

This Methanothrix thermoacetophila (strain DSM 6194 / JCM 14653 / NBRC 101360 / PT) (Methanosaeta thermophila) protein is Transcriptional regulator GfcR.